We begin with the raw amino-acid sequence, 479 residues long: Sulfate adenylyltransferase subunit 1 (479 aa).

The tr-type G domain occupies 25 to 239; the sequence is KSLLRFLTCG…EVLETVDIQR (215 aa). The interval 34-41 is G1; that stretch reads GSVDDGKS. 34–41 is a GTP binding site; that stretch reads GSVDDGKS. The interval 92–96 is G2; that stretch reads GITID. The tract at residues 113-116 is G3; that stretch reads DTPG. GTP contacts are provided by residues 113–117 and 168–171; these read DTPGH and NKMD. A G4 region spans residues 168 to 171; sequence NKMD. The tract at residues 206-208 is G5; it reads SAL.

The protein belongs to the TRAFAC class translation factor GTPase superfamily. Classic translation factor GTPase family. CysN/NodQ subfamily. In terms of assembly, heterodimer composed of CysD, the smaller subunit, and CysN.

It carries out the reaction sulfate + ATP + H(+) = adenosine 5'-phosphosulfate + diphosphate. The protein operates within sulfur metabolism; hydrogen sulfide biosynthesis; sulfite from sulfate: step 1/3. Its function is as follows. With CysD forms the ATP sulfurylase (ATPS) that catalyzes the adenylation of sulfate producing adenosine 5'-phosphosulfate (APS) and diphosphate, the first enzymatic step in sulfur assimilation pathway. APS synthesis involves the formation of a high-energy phosphoric-sulfuric acid anhydride bond driven by GTP hydrolysis by CysN coupled to ATP hydrolysis by CysD. This chain is Sulfate adenylyltransferase subunit 1, found in Salmonella typhimurium (strain LT2 / SGSC1412 / ATCC 700720).